A 338-amino-acid polypeptide reads, in one-letter code: Nicotinate-nucleotide--dimethylbenzimidazole phosphoribosyltransferase (338 aa).

The Proton acceptor role is filled by E305.

Belongs to the CobT family.

The catalysed reaction is 5,6-dimethylbenzimidazole + nicotinate beta-D-ribonucleotide = alpha-ribazole 5'-phosphate + nicotinate + H(+). Its pathway is nucleoside biosynthesis; alpha-ribazole biosynthesis; alpha-ribazole from 5,6-dimethylbenzimidazole: step 1/2. Its function is as follows. Catalyzes the synthesis of alpha-ribazole-5'-phosphate from nicotinate mononucleotide (NAMN) and 5,6-dimethylbenzimidazole (DMB). The sequence is that of Nicotinate-nucleotide--dimethylbenzimidazole phosphoribosyltransferase from Rhizobium rhizogenes (strain K84 / ATCC BAA-868) (Agrobacterium radiobacter).